Here is a 61-residue protein sequence, read N- to C-terminus: Small ribosomal subunit protein uS14 (61 aa).

Zn(2+)-binding residues include C24, C27, C40, and C43.

This sequence belongs to the universal ribosomal protein uS14 family. Zinc-binding uS14 subfamily. As to quaternary structure, part of the 30S ribosomal subunit. Contacts proteins S3 and S10. Zn(2+) serves as cofactor.

Its function is as follows. Binds 16S rRNA, required for the assembly of 30S particles and may also be responsible for determining the conformation of the 16S rRNA at the A site. This is Small ribosomal subunit protein uS14 from Campylobacter curvus (strain 525.92).